The chain runs to 280 residues: Phosphatidylserine decarboxylase proenzyme (280 aa).

Residues Asp-88, His-145, and Ser-248 each act as charge relay system; for autoendoproteolytic cleavage activity in the active site. The active-site Schiff-base intermediate with substrate; via pyruvic acid; for decarboxylase activity is Ser-248. At Ser-248 the chain carries Pyruvic acid (Ser); by autocatalysis.

Belongs to the phosphatidylserine decarboxylase family. PSD-B subfamily. Prokaryotic type I sub-subfamily. As to quaternary structure, heterodimer of a large membrane-associated beta subunit and a small pyruvoyl-containing alpha subunit. The cofactor is pyruvate. Is synthesized initially as an inactive proenzyme. Formation of the active enzyme involves a self-maturation process in which the active site pyruvoyl group is generated from an internal serine residue via an autocatalytic post-translational modification. Two non-identical subunits are generated from the proenzyme in this reaction, and the pyruvate is formed at the N-terminus of the alpha chain, which is derived from the carboxyl end of the proenzyme. The autoendoproteolytic cleavage occurs by a canonical serine protease mechanism, in which the side chain hydroxyl group of the serine supplies its oxygen atom to form the C-terminus of the beta chain, while the remainder of the serine residue undergoes an oxidative deamination to produce ammonia and the pyruvoyl prosthetic group on the alpha chain. During this reaction, the Ser that is part of the protease active site of the proenzyme becomes the pyruvoyl prosthetic group, which constitutes an essential element of the active site of the mature decarboxylase.

It is found in the cell membrane. It carries out the reaction a 1,2-diacyl-sn-glycero-3-phospho-L-serine + H(+) = a 1,2-diacyl-sn-glycero-3-phosphoethanolamine + CO2. It functions in the pathway phospholipid metabolism; phosphatidylethanolamine biosynthesis; phosphatidylethanolamine from CDP-diacylglycerol: step 2/2. Functionally, catalyzes the formation of phosphatidylethanolamine (PtdEtn) from phosphatidylserine (PtdSer). This is Phosphatidylserine decarboxylase proenzyme from Methylobacillus flagellatus (strain ATCC 51484 / DSM 6875 / VKM B-1610 / KT).